Here is an 814-residue protein sequence, read N- to C-terminus: Phenylalanine--tRNA ligase beta subunit (814 aa).

In terms of domain architecture, tRNA-binding spans 39–153 (SARAKGVVVG…ELPALGAPVA (115 aa)). Residues 414–498 (ADASSVLLRR…RLVGFDRFGA (85 aa)) form the B5 domain. Positions 476, 482, 485, and 486 each coordinate Mg(2+). An FDX-ACB domain is found at 720-813 (PTVPASERDL…LVKQHGAELR (94 aa)).

It belongs to the phenylalanyl-tRNA synthetase beta subunit family. Type 1 subfamily. As to quaternary structure, tetramer of two alpha and two beta subunits. Mg(2+) serves as cofactor.

The protein resides in the cytoplasm. It carries out the reaction tRNA(Phe) + L-phenylalanine + ATP = L-phenylalanyl-tRNA(Phe) + AMP + diphosphate + H(+). The chain is Phenylalanine--tRNA ligase beta subunit from Parasynechococcus marenigrum (strain WH8102).